The primary structure comprises 127 residues: Protein ApaG (127 aa).

The ApaG domain maps to 3 to 127; that stretch reads NDQKYDIKVQ…FILSVPRVLH (125 aa).

The sequence is that of Protein ApaG from Nitrosomonas eutropha (strain DSM 101675 / C91 / Nm57).